The sequence spans 561 residues: Putative transport protein YbjL (561 aa).

A run of 5 helical transmembrane segments spans residues 8–28 (LLNG…LCLG), 32–52 (LGSI…LLGQ), 66–86 (FMLF…SIFF), 94–114 (MLAL…GKLF), and 158–178 (NLSL…IVGA). RCK C-terminal domains are found at residues 200–288 (RGLD…SFRN) and 292–373 (VFDR…RIGF). A run of 5 helical transmembrane segments spans residues 383 to 403 (LLAF…TFQF), 406 to 426 (FSFG…LGFM), 451 to 471 (VFMA…LGAI), 475 to 495 (MLIA…LFGA), and 540 to 560 (AIAN…WPGL).

This sequence belongs to the AAE transporter (TC 2.A.81) family. YbjL subfamily.

The protein resides in the cell membrane. The chain is Putative transport protein YbjL from Shigella flexneri.